We begin with the raw amino-acid sequence, 117 residues long: UPF0231 protein HI_1724 (117 aa).

It belongs to the UPF0231 family.

The protein is UPF0231 protein HI_1724 of Haemophilus influenzae (strain ATCC 51907 / DSM 11121 / KW20 / Rd).